A 240-amino-acid chain; its full sequence is Fatty acid metabolism regulator protein (240 aa).

One can recognise an HTH gntR-type domain in the interval 6-74; that stretch reads KGPASFAEKY…HGKPTRVNNF (69 aa). The segment at residues 34–53 is a DNA-binding region (H-T-H motif); that stretch reads ERELSELIGVTRTTLREVLQ.

Homodimer.

The protein localises to the cytoplasm. In terms of biological role, multifunctional regulator of fatty acid metabolism. This is Fatty acid metabolism regulator protein from Shewanella amazonensis (strain ATCC BAA-1098 / SB2B).